The sequence spans 205 residues: Recombination protein RecR (205 aa).

Residues C58–C75 form a C4-type zinc finger. The Toprim domain maps to R83–P182.

It belongs to the RecR family.

May play a role in DNA repair. It seems to be involved in an RecBC-independent recombinational process of DNA repair. It may act with RecF and RecO. The polypeptide is Recombination protein RecR (Chloroherpeton thalassium (strain ATCC 35110 / GB-78)).